The primary structure comprises 102 residues: Large ribosomal subunit protein bL21 (102 aa).

This sequence belongs to the bacterial ribosomal protein bL21 family. Part of the 50S ribosomal subunit. Contacts protein L20.

In terms of biological role, this protein binds to 23S rRNA in the presence of protein L20. In Geotalea uraniireducens (strain Rf4) (Geobacter uraniireducens), this protein is Large ribosomal subunit protein bL21.